The chain runs to 428 residues: Enolase (428 aa).

Gln162 contacts (2R)-2-phosphoglycerate. The active-site Proton donor is Glu204. Mg(2+) is bound by residues Asp241, Glu286, and Asp313. Residues Lys338, Arg367, Ser368, and Lys389 each coordinate (2R)-2-phosphoglycerate. The active-site Proton acceptor is Lys338.

The protein belongs to the enolase family. As to quaternary structure, component of the RNA degradosome, a multiprotein complex involved in RNA processing and mRNA degradation. Mg(2+) serves as cofactor.

It localises to the cytoplasm. The protein localises to the secreted. Its subcellular location is the cell surface. The catalysed reaction is (2R)-2-phosphoglycerate = phosphoenolpyruvate + H2O. It participates in carbohydrate degradation; glycolysis; pyruvate from D-glyceraldehyde 3-phosphate: step 4/5. Its function is as follows. Catalyzes the reversible conversion of 2-phosphoglycerate (2-PG) into phosphoenolpyruvate (PEP). It is essential for the degradation of carbohydrates via glycolysis. This Vesicomyosocius okutanii subsp. Calyptogena okutanii (strain HA) protein is Enolase.